We begin with the raw amino-acid sequence, 216 residues long: Protein Syd (216 aa).

It belongs to the Syd family.

The protein localises to the cell inner membrane. Interacts with the SecY protein in vivo. May bind preferentially to an uncomplexed state of SecY, thus functioning either as a chelating agent for excess SecY in the cell or as a regulatory factor that negatively controls the translocase function. The sequence is that of Protein Syd from Shewanella sp. (strain ANA-3).